A 453-amino-acid polypeptide reads, in one-letter code: Phosphatidylserine decarboxylase proenzyme 1, mitochondrial (453 aa).

Residues 1-29 (MKPRFPQNVYFLARYSYLRRFQHSQRRTF) constitute a mitochondrion transit peptide. Topologically, residues 30-74 (SSFLNNIRSNYSGARASPLGGSSGAGAGAGGGGTGDSKGNAFLVP) are mitochondrial matrix. Residues 75 to 93 (GATMATILMLGALHARRLY) form a helical membrane-spanning segment. Over 94-453 (EDKKIEEKRE…GQALGRWKEE (360 aa)) the chain is Mitochondrial intermembrane. Active-site charge relay system; for autoendoproteolytic cleavage activity residues include aspartate 199, histidine 296, and serine 408. Residue serine 408 is the Schiff-base intermediate with substrate; via pyruvic acid; for decarboxylase activity of the active site. At serine 408 the chain carries Pyruvic acid (Ser); by autocatalysis.

This sequence belongs to the phosphatidylserine decarboxylase family. PSD-B subfamily. Eukaryotic type I sub-subfamily. Heterodimer of a large membrane-associated beta subunit and a small pyruvoyl-containing alpha subunit. Pyruvate is required as a cofactor. Is synthesized initially as an inactive proenzyme. Formation of the active enzyme involves a self-maturation process in which the active site pyruvoyl group is generated from an internal serine residue via an autocatalytic post-translational modification. Two non-identical subunits are generated from the proenzyme in this reaction, and the pyruvate is formed at the N-terminus of the alpha chain, which is derived from the carboxyl end of the proenzyme. The autoendoproteolytic cleavage occurs by a canonical serine protease mechanism, in which the side chain hydroxyl group of the serine supplies its oxygen atom to form the C-terminus of the beta chain, while the remainder of the serine residue undergoes an oxidative deamination to produce ammonia and the pyruvoyl prosthetic group on the alpha chain. During this reaction, the Ser that is part of the protease active site of the proenzyme becomes the pyruvoyl prosthetic group, which constitutes an essential element of the active site of the mature decarboxylase. In terms of tissue distribution, expressed in roots, leaves, stems and flowers.

The protein localises to the mitochondrion. It is found in the mitochondrion inner membrane. It carries out the reaction a 1,2-diacyl-sn-glycero-3-phospho-L-serine + H(+) = a 1,2-diacyl-sn-glycero-3-phosphoethanolamine + CO2. Its pathway is phospholipid metabolism; phosphatidylethanolamine biosynthesis; phosphatidylethanolamine from CDP-diacylglycerol: step 2/2. Functionally, catalyzes the formation of phosphatidylethanolamine (PtdEtn) from phosphatidylserine (PtdSer). Plays a central role in phospholipid metabolism and in the interorganelle trafficking of phosphatidylserine. Contributes only to a minor proportion of PtdEtn production. In Arabidopsis thaliana (Mouse-ear cress), this protein is Phosphatidylserine decarboxylase proenzyme 1, mitochondrial (PSD1).